The sequence spans 171 residues: Photosystem I reaction center subunit N, chloroplastic (171 aa).

The N-terminal 49 residues, 1-49 (MAAMNSSVLTCSYAIAGSGSVELNQKVGLVNSSVGFGQKKQMIMPVIKA), are a transit peptide targeting the chloroplast. Residues 50–86 (QRVVGDDVDGSNGRRSAMVFLAATLFSTAAVSASANA) constitute a thylakoid transit peptide. N-acetylglycine; partial is present on Gly87.

This sequence belongs to the psaN family. Interacts with GRF5, GRF7, GRF9 and GRF10. The transit peptide is the site of PSAN that associates with 14-3-3.

The protein resides in the plastid. It localises to the chloroplast thylakoid membrane. Functionally, may function in mediating the binding of the antenna complexes to the PSI reaction center and core antenna. Plays an important role in docking plastocyanin to the PSI complex. Does not bind pigments. This is Photosystem I reaction center subunit N, chloroplastic (PSAN) from Arabidopsis thaliana (Mouse-ear cress).